Consider the following 447-residue polypeptide: 1-aminocyclopropane-1-carboxylate synthase 7 (447 aa).

2 residues coordinate substrate: Glu61 and Tyr100. Lys285 carries the post-translational modification N6-(pyridoxal phosphate)lysine.

This sequence belongs to the class-I pyridoxal-phosphate-dependent aminotransferase family. As to quaternary structure, homodimer and heterodimer. In vivo, the relevance of heterodimerization with other ACS enzymes is however unsure. Interacts with XBAT32. The cofactor is pyridoxal 5'-phosphate. Ubiquitinated by XBAT32. Ubiquitination probably leads to its subsequent degradation, thus controlling ethylene production. Expressed in roots.

It carries out the reaction S-adenosyl-L-methionine = 1-aminocyclopropane-1-carboxylate + S-methyl-5'-thioadenosine + H(+). It functions in the pathway alkene biosynthesis; ethylene biosynthesis via S-adenosyl-L-methionine; ethylene from S-adenosyl-L-methionine: step 1/2. Functionally, 1-aminocyclopropane-1-carboxylate synthase (ACS) enzymes catalyze the conversion of S-adenosyl-L-methionine (SAM) into 1-aminocyclopropane-1-carboxylate (ACC), a direct precursor of ethylene. The sequence is that of 1-aminocyclopropane-1-carboxylate synthase 7 (ACS7) from Arabidopsis thaliana (Mouse-ear cress).